We begin with the raw amino-acid sequence, 336 residues long: DNA polymerase beta (336 aa).

The K(+) site is built by K59, L61, and V64. Na(+)-binding residues include K59, L61, and V64. Residue K71 is the Nucleophile; Schiff-base intermediate with DNA; for 5'-dRP lyase activity of the active site. At R82 the chain carries Omega-N-methylarginine; by PRMT6. K(+)-binding residues include T100, V102, and I105. 3 residues coordinate Na(+): T100, V102, and I105. Residue R148 coordinates a 2'-deoxyribonucleoside 5'-triphosphate. R151 is subject to Omega-N-methylarginine; by PRMT6. A 2'-deoxyribonucleoside 5'-triphosphate-binding residues include S179, R182, G188, and D189. Positions 182-191 are DNA-binding; the sequence is RGAESSGDID. Residues D189, D191, and D257 each contribute to the Mg(2+) site.

The protein belongs to the DNA polymerase type-X family. It depends on Mg(2+) as a cofactor. Methylation by PRMT6 stimulates the polymerase activity by enhancing DNA binding and processivity. In terms of processing, ubiquitinated: monoubiquitinated by huwe1/arf-bp1. Monoubiquitinated protein is then the target of stub1/chip, which catalyzes polyubiquitination from monoubiquitin, leading to degradation by the proteasome. usp47 mediates the deubiquitination of monoubiquitinated protein, preventing polyubiquitination by STUB1/CHIP and its subsequent degradation.

The protein localises to the nucleus. The protein resides in the cytoplasm. It carries out the reaction DNA(n) + a 2'-deoxyribonucleoside 5'-triphosphate = DNA(n+1) + diphosphate. The enzyme catalyses a 5'-end 2'-deoxyribose-2'-deoxyribonucleotide-DNA = (2E,4S)-4-hydroxypenten-2-al-5-phosphate + a 5'-end 5'-phospho-2'-deoxyribonucleoside-DNA + H(+). The catalysed reaction is 2'-deoxyribonucleotide-(2'-deoxyribose 5'-phosphate)-2'-deoxyribonucleotide-DNA = a 3'-end 2'-deoxyribonucleotide-(2,3-dehydro-2,3-deoxyribose 5'-phosphate)-DNA + a 5'-end 5'-phospho-2'-deoxyribonucleoside-DNA + H(+). Its function is as follows. Repair polymerase that plays a key role in base-excision repair. During this process, the damaged base is excised by specific DNA glycosylases, the DNA backbone is nicked at the abasic site by an apurinic/apyrimidic (AP) endonuclease, and POLB removes 5'-deoxyribose-phosphate from the preincised AP site acting as a 5'-deoxyribose-phosphate lyase (5'-dRP lyase); through its DNA polymerase activity, it adds one nucleotide to the 3' end of the arising single-nucleotide gap. Conducts 'gap-filling' DNA synthesis in a stepwise distributive fashion rather than in a processive fashion as for other DNA polymerases. It is also able to cleave sugar-phosphate bonds 3' to an intact AP site, acting as an AP lyase. This chain is DNA polymerase beta (polb), found in Danio rerio (Zebrafish).